The chain runs to 208 residues: Cytidylate kinase (208 aa).

7 to 15 (GPAASGKGT) serves as a coordination point for ATP.

It belongs to the cytidylate kinase family. Type 1 subfamily.

The protein resides in the cytoplasm. It carries out the reaction CMP + ATP = CDP + ADP. The enzyme catalyses dCMP + ATP = dCDP + ADP. The chain is Cytidylate kinase from Xanthobacter autotrophicus (strain ATCC BAA-1158 / Py2).